A 172-amino-acid polypeptide reads, in one-letter code: Peptide deformylase (172 aa).

Fe cation-binding residues include Cys-94 and His-136. Residue Glu-137 is part of the active site. Residue His-140 participates in Fe cation binding.

The protein belongs to the polypeptide deformylase family. Fe(2+) is required as a cofactor.

The enzyme catalyses N-terminal N-formyl-L-methionyl-[peptide] + H2O = N-terminal L-methionyl-[peptide] + formate. In terms of biological role, removes the formyl group from the N-terminal Met of newly synthesized proteins. Requires at least a dipeptide for an efficient rate of reaction. N-terminal L-methionine is a prerequisite for activity but the enzyme has broad specificity at other positions. In Pelagibacter ubique (strain HTCC1062), this protein is Peptide deformylase.